The chain runs to 159 residues: Urease accessory protein UreE (159 aa).

Positions 140–159 are disordered; sequence GAYHGTGHHHHGHGHDPHHG.

The protein belongs to the UreE family.

Its subcellular location is the cytoplasm. Functionally, involved in urease metallocenter assembly. Binds nickel. Probably functions as a nickel donor during metallocenter assembly. The protein is Urease accessory protein UreE of Sinorhizobium fredii (strain NBRC 101917 / NGR234).